We begin with the raw amino-acid sequence, 266 residues long: Cytochrome c oxidase assembly factor 7 homolog (266 aa).

2 Sel1-like repeats span residues 32 to 64 (PEAC…DDYG) and 66 to 104 (AKSC…NLND). Residues 166 to 179 (AVTASSGSGTSSPP) show a composition bias toward low complexity. The disordered stretch occupies residues 166 to 187 (AVTASSGSGTSSPPAGQPPLKD). One copy of the Sel1-like 3 repeat lies at 212 to 247 (MYACANLSQMYARGDGIEKNEKEAEKYKKLALEMQD).

The protein belongs to the hcp beta-lactamase family.

In terms of biological role, required for locomotion. Probably involved in the regulation of formation/maintenance of motor neurons at presynaptic terminals at the neuromuscular junction. The chain is Cytochrome c oxidase assembly factor 7 homolog from Drosophila melanogaster (Fruit fly).